We begin with the raw amino-acid sequence, 380 residues long: Cytochrome b (380 aa).

The next 4 helical transmembrane spans lie at 34-54, 78-99, 114-134, and 179-199; these read FGSLLGICLMTQILTGLLLAM, WLIRNLHANGASFFFICIYLHI, WNTGVILLLTLMATAFVGYVL, and FFALHFLLPFMIAGLTLVHLT. The heme b site is built by H84 and H98. Heme b contacts are provided by H183 and H197. H202 lines the a ubiquinone pocket. Transmembrane regions (helical) follow at residues 227-247, 289-309, 321-341, and 348-368; these read LKDILGFTLMLLPLTTLALFS, LGGVLALAASVLILFLAPFLH, LSQLLFWILVANLFILTWVGS, and FIIIGQLASFTYFTILLILFP.

This sequence belongs to the cytochrome b family. The cytochrome bc1 complex contains 11 subunits: 3 respiratory subunits (MT-CYB, CYC1 and UQCRFS1), 2 core proteins (UQCRC1 and UQCRC2) and 6 low-molecular weight proteins (UQCRH/QCR6, UQCRB/QCR7, UQCRQ/QCR8, UQCR10/QCR9, UQCR11/QCR10 and a cleavage product of UQCRFS1). This cytochrome bc1 complex then forms a dimer. Heme b is required as a cofactor.

The protein resides in the mitochondrion inner membrane. Functionally, component of the ubiquinol-cytochrome c reductase complex (complex III or cytochrome b-c1 complex) that is part of the mitochondrial respiratory chain. The b-c1 complex mediates electron transfer from ubiquinol to cytochrome c. Contributes to the generation of a proton gradient across the mitochondrial membrane that is then used for ATP synthesis. The protein is Cytochrome b (MT-CYB) of Procellaria parkinsoni (Black petrel).